The sequence spans 479 residues: UDP-N-acetylmuramate--L-alanine ligase (479 aa).

114 to 120 (GTHGKTT) is an ATP binding site.

Belongs to the MurCDEF family.

The protein resides in the cytoplasm. The enzyme catalyses UDP-N-acetyl-alpha-D-muramate + L-alanine + ATP = UDP-N-acetyl-alpha-D-muramoyl-L-alanine + ADP + phosphate + H(+). Its pathway is cell wall biogenesis; peptidoglycan biosynthesis. Cell wall formation. The protein is UDP-N-acetylmuramate--L-alanine ligase of Pelodictyon phaeoclathratiforme (strain DSM 5477 / BU-1).